The following is a 358-amino-acid chain: Peptide chain release factor 1 (358 aa).

Gln233 carries the post-translational modification N5-methylglutamine.

This sequence belongs to the prokaryotic/mitochondrial release factor family. In terms of processing, methylated by PrmC. Methylation increases the termination efficiency of RF1.

The protein localises to the cytoplasm. Peptide chain release factor 1 directs the termination of translation in response to the peptide chain termination codons UAG and UAA. The sequence is that of Peptide chain release factor 1 from Listeria monocytogenes serovar 1/2a (strain ATCC BAA-679 / EGD-e).